An 876-amino-acid polypeptide reads, in one-letter code: Phosphoenolpyruvate carboxylase (876 aa).

Residues H138 and K543 contribute to the active site.

The protein belongs to the PEPCase type 1 family. Mg(2+) serves as cofactor.

The enzyme catalyses oxaloacetate + phosphate = phosphoenolpyruvate + hydrogencarbonate. Its function is as follows. Forms oxaloacetate, a four-carbon dicarboxylic acid source for the tricarboxylic acid cycle. The sequence is that of Phosphoenolpyruvate carboxylase from Pseudomonas fluorescens (strain ATCC BAA-477 / NRRL B-23932 / Pf-5).